The sequence spans 58 residues: UPF0337 protein SAV_738 (58 aa).

Residues M1 to K58 are disordered. Over residues L31–K58 the composition is skewed to basic and acidic residues.

It belongs to the UPF0337 (CsbD) family.

This chain is UPF0337 protein SAV_738, found in Streptomyces avermitilis (strain ATCC 31267 / DSM 46492 / JCM 5070 / NBRC 14893 / NCIMB 12804 / NRRL 8165 / MA-4680).